Here is a 261-residue protein sequence, read N- to C-terminus: Thiamine thiazole synthase (261 aa).

Residues S40, 59–60 (ER), G67, V133, and 159–161 (HID) contribute to the NAD(+) site. D161 and H176 together coordinate Fe cation. NAD(+) is bound by residues S179 and M226. Residue R236 participates in glycine binding.

This sequence belongs to the THI4 family. In terms of assembly, homooctamer; tetramer of dimers. Requires Fe(2+) as cofactor.

The catalysed reaction is hydrogen sulfide + glycine + NAD(+) = ADP-5-ethyl-4-methylthiazole-2-carboxylate + nicotinamide + 3 H2O + H(+). It participates in cofactor biosynthesis; thiamine diphosphate biosynthesis. Functionally, involved in the biosynthesis of the thiazole moiety of thiamine. Catalyzes the conversion of NAD and glycine to adenosine diphosphate 5-(2-hydroxyethyl)-4-methylthiazole-2-carboxylate (ADT), an adenylated thiazole intermediate, using free sulfide as a source of sulfur. The sequence is that of Thiamine thiazole synthase from Methanococcus maripaludis (strain C6 / ATCC BAA-1332).